The primary structure comprises 430 residues: Glutamate-1-semialdehyde 2,1-aminomutase (430 aa).

Lys-267 carries the N6-(pyridoxal phosphate)lysine modification.

This sequence belongs to the class-III pyridoxal-phosphate-dependent aminotransferase family. HemL subfamily. Homodimer. It depends on pyridoxal 5'-phosphate as a cofactor.

Its subcellular location is the cytoplasm. It carries out the reaction (S)-4-amino-5-oxopentanoate = 5-aminolevulinate. The protein operates within porphyrin-containing compound metabolism; protoporphyrin-IX biosynthesis; 5-aminolevulinate from L-glutamyl-tRNA(Glu): step 2/2. The polypeptide is Glutamate-1-semialdehyde 2,1-aminomutase (Anaeromyxobacter dehalogenans (strain 2CP-C)).